The primary structure comprises 294 residues: Foldase protein PrsA 1 (294 aa).

The signal sequence occupies residues 1 to 21; it reads MTKLKKVMISVIAATLLLLAG. C22 carries the N-palmitoyl cysteine lipid modification. The S-diacylglycerol cysteine moiety is linked to residue C22. A PpiC domain is found at 135–226; sequence EPDITVRHIL…YGYHLIQLVK (92 aa).

The protein belongs to the PrsA family.

The protein resides in the cell membrane. It catalyses the reaction [protein]-peptidylproline (omega=180) = [protein]-peptidylproline (omega=0). Functionally, plays a major role in protein secretion by helping the post-translocational extracellular folding of several secreted proteins. This is Foldase protein PrsA 1 from Listeria monocytogenes serotype 4b (strain F2365).